The chain runs to 92 residues: Small ribosomal subunit protein uS19 (92 aa).

Belongs to the universal ribosomal protein uS19 family.

Protein S19 forms a complex with S13 that binds strongly to the 16S ribosomal RNA. This Methylobacterium nodulans (strain LMG 21967 / CNCM I-2342 / ORS 2060) protein is Small ribosomal subunit protein uS19.